The chain runs to 316 residues: Mycothiol acetyltransferase (316 aa).

N-acetyltransferase domains lie at 16–153 (REVR…VPAV) and 156–316 (VRIR…PAAN). Glu36 contributes to the 1D-myo-inositol 2-(L-cysteinylamino)-2-deoxy-alpha-D-glucopyranoside binding site. Acetyl-CoA is bound by residues 83–85 (LVV) and 91–96 (RRGIGS). Residues Glu183, Lys228, and Glu238 each contribute to the 1D-myo-inositol 2-(L-cysteinylamino)-2-deoxy-alpha-D-glucopyranoside site. Acetyl-CoA-binding positions include 242–244 (VGV) and 249–255 (QGRGLGQ). A 1D-myo-inositol 2-(L-cysteinylamino)-2-deoxy-alpha-D-glucopyranoside-binding site is contributed by Tyr283. 288 to 293 (NVAAVR) contacts acetyl-CoA.

This sequence belongs to the acetyltransferase family. MshD subfamily. In terms of assembly, monomer.

It catalyses the reaction 1D-myo-inositol 2-(L-cysteinylamino)-2-deoxy-alpha-D-glucopyranoside + acetyl-CoA = mycothiol + CoA + H(+). In terms of biological role, catalyzes the transfer of acetyl from acetyl-CoA to desacetylmycothiol (Cys-GlcN-Ins) to form mycothiol. The sequence is that of Mycothiol acetyltransferase from Mycobacterium avium (strain 104).